A 334-amino-acid chain; its full sequence is MTKVVVCALYKFVSLPHFESIRAPLLAMMEQAEIKGTLLLASEGINGTVAGTQEAIEALLVWLNSQNGLDNIVHKLSFDDEMPFYRTKVKLKNEIVTMGVEGIDPLKVVGTYVKPQDWNALISDPDVILVDTRNDYEVQIGTFKNAVNPVTETFREFPEYVKQNLDPAKHKKVAMFCTGGIRCEKSTAYLKEQGFDEVYHLEGGILKYLEEVKAEESLWEGECFVFDNRVAVNHDLKKGQYDQCNACRMPITEAEKQSPAYVQGVSCPHCIDKISDEQRKRFVERERQVNLAKARNEAHIGSDVNQVIEARREKKEAQRRLAAEKNNAKKSQVL.

Positions 123–217 (SDPDVILVDT…YLEEVKAEES (95 aa)) constitute a Rhodanese domain. C177 (cysteine persulfide intermediate) is an active-site residue.

The protein belongs to the TrhO family.

It carries out the reaction uridine(34) in tRNA + AH2 + O2 = 5-hydroxyuridine(34) in tRNA + A + H2O. Its function is as follows. Catalyzes oxygen-dependent 5-hydroxyuridine (ho5U) modification at position 34 in tRNAs. The sequence is that of tRNA uridine(34) hydroxylase from Shewanella baltica (strain OS195).